Here is a 341-residue protein sequence, read N- to C-terminus: Fe-S cluster assembly protein DRE2 (341 aa).

The tract at residues 1 to 157 is N-terminal SAM-like domain; that stretch reads MNTLLLLHPT…FKKLSSPPTL (157 aa). Residues 151 to 171 form a disordered region; the sequence is LSSPPTLTDSSEADEDEESQL. Positions 157–204 are linker; the sequence is LTDSSEADEDEESQLNEKLKGSKLIYFDESSDDEIIDEDELLRDDDGA. Acidic residues predominate over residues 161–170; sequence SEADEDEESQ. [2Fe-2S] cluster is bound by residues Cys-215, Cys-227, Cys-230, and Cys-232. Residues 215 to 232 form a fe-S binding site A region; sequence CALPNGKRRKKACKDCTC. Cys-304, Cys-307, Cys-315, and Cys-318 together coordinate [4Fe-4S] cluster. 2 short sequence motifs (cx2C motif) span residues 304-307 and 315-318; these read CGSC and CDGC. The tract at residues 304–318 is fe-S binding site B; it reads CGSCALGDAFRCDGC.

Belongs to the anamorsin family. Monomer. Interacts with TAH18. Interacts with MIA40. [2Fe-2S] cluster serves as cofactor. It depends on [4Fe-4S] cluster as a cofactor.

The protein localises to the cytoplasm. Its subcellular location is the mitochondrion intermembrane space. In terms of biological role, component of the cytosolic iron-sulfur (Fe-S) protein assembly (CIA) machinery required for the maturation of extramitochondrial Fe-S proteins. Part of an electron transfer chain functioning in an early step of cytosolic Fe-S biogenesis, facilitating the de novo assembly of a [4Fe-4S] cluster on the scaffold complex CFD1-NBP35. Electrons are transferred to DRE2 from NADPH via the FAD- and FMN-containing protein TAH18. TAH18-DRE2 are also required for the assembly of the diferric tyrosyl radical cofactor of ribonucleotide reductase (RNR), probably by providing electrons for reduction during radical cofactor maturation in the catalytic small subunit RNR2. This Komagataella phaffii (strain GS115 / ATCC 20864) (Yeast) protein is Fe-S cluster assembly protein DRE2.